We begin with the raw amino-acid sequence, 310 residues long: Ribosomal RNA small subunit methyltransferase H (310 aa).

Residues 32-34, Asp52, Phe79, Asp100, and Gln107 each bind S-adenosyl-L-methionine; that span reads GGH.

This sequence belongs to the methyltransferase superfamily. RsmH family.

The protein localises to the cytoplasm. It carries out the reaction cytidine(1402) in 16S rRNA + S-adenosyl-L-methionine = N(4)-methylcytidine(1402) in 16S rRNA + S-adenosyl-L-homocysteine + H(+). In terms of biological role, specifically methylates the N4 position of cytidine in position 1402 (C1402) of 16S rRNA. This chain is Ribosomal RNA small subunit methyltransferase H, found in Geobacillus kaustophilus (strain HTA426).